The following is a 386-amino-acid chain: MMAKNCNLVSVLCVFLVLTLFNKPITVAGQNIPAVGLFTFGDSNFDAGNKQTLTKTLLPQTFWPYGKSRDDPNGKFSDGLIAPDFLAKFMRIPIVIPPALQPNVNVSRGASFAVADATLLGAPVESLTLNQQVRKFNQMKAANWNDDFVKKSVFMIYIGANDYLNFTKNNPNADASTQQAFVTSVTNKLKNDISLLYSSGASKFVIQTLAPLGCLPIVRQEFNTGMDQCYEKLNDLAKQHNEKIGPMLNELARTAPASAPFQFTVFDFYNAILTRTQRNQNFRFFVTNASCCGVGTHDAYGCGFPNVHSRLCEYQRSYLFFDGRHNTEKAQEMFGHLLFGADTNVIQPMNIRELVVYPADEPMRESWVPPTSATVQLRESRGYEYY.

Residues 1-29 (MMAKNCNLVSVLCVFLVLTLFNKPITVAG) form the signal peptide. The active-site Nucleophile is Ser-43. Asn-105, Asn-165, and Asn-288 each carry an N-linked (GlcNAc...) asparagine glycan. Residues Asp-322 and His-325 contribute to the active site.

It belongs to the 'GDSL' lipolytic enzyme family. In terms of assembly, part of the PYK10 complex. Interacts with MVP1. As to expression, expressed mainly in roots.

It localises to the endoplasmic reticulum. In terms of biological role, involved in the control of the PYK10 complex size and possibly substrate specificity. May be exported from the endoplasmic reticulum upon interaction with MVP1. This Arabidopsis thaliana (Mouse-ear cress) protein is Inactive GDSL esterase/lipase-like protein 23 (GLL23).